The chain runs to 1041 residues: FHIP family protein CG3558 (1041 aa).

Ser-490 carries the phosphoserine modification. 5 disordered regions span residues 619–648 (RPAD…SSSL), 792–818 (KGNE…QGQL), 858–879 (SMFS…SASS), 903–947 (DGRG…SNSS), and 959–986 (SNTT…SEPA). Polar residues predominate over residues 628-637 (TDTTVATTAS). The residue at position 797 (Ser-797) is a Phosphoserine. Residues 800-818 (HHSQQQQMVTNSGQQQGQL) are compositionally biased toward polar residues. Polar residues predominate over residues 903-925 (DGRGISQAQTSAGTCETSLSTQP). Residues 927–947 (AGASRTGANATSTAASGSNSS) are compositionally biased toward low complexity. A compositionally biased stretch (polar residues) spans 959–968 (SNTTTHSAST).

It belongs to the FHIP family.

This is FHIP family protein CG3558 from Drosophila melanogaster (Fruit fly).